The chain runs to 502 residues: ATP synthase subunit alpha (502 aa).

169–176 is a binding site for ATP; the sequence is GDRQTGKT.

The protein belongs to the ATPase alpha/beta chains family. In terms of assembly, F-type ATPases have 2 components, CF(1) - the catalytic core - and CF(0) - the membrane proton channel. CF(1) has five subunits: alpha(3), beta(3), gamma(1), delta(1), epsilon(1). CF(0) has three main subunits: a(1), b(2) and c(9-12). The alpha and beta chains form an alternating ring which encloses part of the gamma chain. CF(1) is attached to CF(0) by a central stalk formed by the gamma and epsilon chains, while a peripheral stalk is formed by the delta and b chains.

It is found in the cell membrane. It catalyses the reaction ATP + H2O + 4 H(+)(in) = ADP + phosphate + 5 H(+)(out). Its function is as follows. Produces ATP from ADP in the presence of a proton gradient across the membrane. The alpha chain is a regulatory subunit. This Staphylococcus aureus (strain COL) protein is ATP synthase subunit alpha.